Consider the following 353-residue polypeptide: UPF0283 membrane protein YcjF (353 aa).

3 consecutive transmembrane segments (helical) span residues 70–90 (MVMG…VQWT), 100–120 (VALG…GSVV), and 213–233 (ESTL…FIAW).

Belongs to the UPF0283 family.

It is found in the cell inner membrane. The sequence is that of UPF0283 membrane protein YcjF from Escherichia coli O127:H6 (strain E2348/69 / EPEC).